Reading from the N-terminus, the 142-residue chain is Protein archease (142 aa).

Ca(2+) contacts are provided by D12 and D141.

This sequence belongs to the archease family.

Activates the tRNA-splicing ligase complex by facilitating the enzymatic turnover of catalytic subunit RtcB. Acts by promoting the guanylylation of RtcB, a key intermediate step in tRNA ligation. Can also alter the NTP specificity of RtcB such that ATP, dGTP or ITP is used efficiently. This Thermococcus kodakarensis (strain ATCC BAA-918 / JCM 12380 / KOD1) (Pyrococcus kodakaraensis (strain KOD1)) protein is Protein archease.